We begin with the raw amino-acid sequence, 290 residues long: Thymidylate synthase (290 aa).

A dUMP-binding site is contributed by arginine 31. Histidine 61 contacts (6R)-5,10-methylene-5,6,7,8-tetrahydrofolate. 152–153 (RR) contacts dUMP. The Nucleophile role is filled by cysteine 172. DUMP is bound by residues 192-195 (RSAD), asparagine 203, and 233-235 (HIY). Position 195 (aspartate 195) interacts with (6R)-5,10-methylene-5,6,7,8-tetrahydrofolate. Alanine 289 contributes to the (6R)-5,10-methylene-5,6,7,8-tetrahydrofolate binding site.

This sequence belongs to the thymidylate synthase family. Bacterial-type ThyA subfamily. As to quaternary structure, homodimer.

The protein localises to the cytoplasm. It carries out the reaction dUMP + (6R)-5,10-methylene-5,6,7,8-tetrahydrofolate = 7,8-dihydrofolate + dTMP. Its pathway is pyrimidine metabolism; dTTP biosynthesis. In terms of biological role, catalyzes the reductive methylation of 2'-deoxyuridine-5'-monophosphate (dUMP) to 2'-deoxythymidine-5'-monophosphate (dTMP) while utilizing 5,10-methylenetetrahydrofolate (mTHF) as the methyl donor and reductant in the reaction, yielding dihydrofolate (DHF) as a by-product. This enzymatic reaction provides an intracellular de novo source of dTMP, an essential precursor for DNA biosynthesis. The polypeptide is Thymidylate synthase (Psychrobacter cryohalolentis (strain ATCC BAA-1226 / DSM 17306 / VKM B-2378 / K5)).